The following is a 179-amino-acid chain: MRFVMPGDRIGSAEEYVKGEGVYEEGGELFAAVAGKLIIKDRVAKVESISPIPEIVKGDVVLGRVVDLRNSIALIEVSSKKGENRGPSNRGIGILHVSNVDEGYVKEISEAVGYLDILKARVIGDNLRLSTKEEEMGVLRALCSNCKTEMVREGDILKCPECGRVEKRKISTDYGKGEW.

The 80-residue stretch at 58-137 (GDVVLGRVVD…RLSTKEEEMG (80 aa)) folds into the S1 motif domain. Residues cysteine 143, cysteine 146, cysteine 159, and cysteine 162 each coordinate Zn(2+).

It belongs to the CSL4 family. As to quaternary structure, component of the archaeal exosome complex. Forms a trimer of Rrp4 and/or Csl4 subunits. The trimer associates with a hexameric ring-like arrangement composed of 3 Rrp41-Rrp42 heterodimers. Interacts with DnaG.

It localises to the cytoplasm. In terms of biological role, non-catalytic component of the exosome, which is a complex involved in RNA degradation. Increases the RNA binding and the efficiency of RNA degradation. Helpful for the interaction of the exosome with A-poor RNAs. This Archaeoglobus fulgidus (strain ATCC 49558 / DSM 4304 / JCM 9628 / NBRC 100126 / VC-16) protein is Exosome complex component Csl4.